The chain runs to 377 residues: Guanine nucleotide-binding protein subunit beta-2 (377 aa).

WD repeat units follow at residues 63-93, 105-135, 154-185, 202-233, 246-276, 293-323, and 339-369; these read GHTGKVYSLDWTPEKNRIVSASQDGRLIVWN, LPCAWVMTCAFSPSGQSVACGGLDSVCSIFN, GHKGYVSSCQYVPDEDTHVITSSGDQTCVLWD, GHTADVQSVSISSSNPRLFVSGSCDSTARLWD, GHEGDVNTVKFFPDGNRFGTGSDDGTCRLFD, GDIPHVTSMAFSISGRLLFVGYSNGDCYVWD, and SHEGRISCLGLSADGSALCTGSWDTNLKIWA.

This sequence belongs to the WD repeat G protein beta family. As to quaternary structure, g proteins are composed of 3 units, alpha, beta and gamma.

Its function is as follows. Guanine nucleotide-binding proteins (G proteins) are involved as a modulator or transducer in various transmembrane signaling systems. The beta and gamma chains are required for the GTPase activity, for replacement of GDP by GTP, and for G protein-effector interaction. The sequence is that of Guanine nucleotide-binding protein subunit beta-2 from Nicotiana tabacum (Common tobacco).